The following is a 1086-amino-acid chain: Rh5-interacting protein (1086 aa).

A signal peptide spans 1-19; it reads MFRIFFTLLIIILIKKTSA. N103, N144, N228, N303, N334, N480, N498, N506, N526, and N646 each carry an N-linked (GlcNAc...) asparagine glycan. EGF-like domains are found at residues 287-321 and 325-362; these read RCTQ…NNCE and LCTV…NKCY. EGF-like domains are found at residues 636–675, 679–715, 719–753, 818–854, 858–897, 901–938, and 942–979; these read SCSN…KLCE, DCES…GKCV, KCDL…GVCI, YCKD…GECI, SCLI…GKCV, KCVH…GVCL, and PCLK…DSCV. Residues N964 and N1021 are each glycosylated (N-linked (GlcNAc...) asparagine).

In terms of assembly, component of the PfRH5 adhesion complex composed of 1 copy of CyRPA, RH5 and RIPR; the complex is formed during merozoite invasion of host erythrocytes specifically at the interface between the parasite and host membranes. Within the complex, interacts with CyRPA. CyRPA recruitment of RIPR to RH5-P113-BSG leads to the formation of the PfRH5 adhesion complex which probably in turn releases RH5 from P113 while maintaining the interaction of the PfRH5 adhesion complex with BSG. Proteolytically cleaved into two chains of 125kDa and 65kDa which remain associated. The cleavage occurs at the schizont stage prior to the release of merozoites. Post-translationally, contains disulfide bonds.

The protein localises to the secreted. Its subcellular location is the cytoplasmic vesicle. The protein resides in the secretory vesicle. It localises to the microneme lumen. It is found in the cell membrane. The protein localises to the host cell membrane. In terms of biological role, essential for the invasion of host erythrocytes by blood stage merozoites. As part of the PfRH5 adhesion complex, facilitates the interaction of RH5 and human BSG required for the Ca(2+) release into the erythrocyte. The sequence is that of Rh5-interacting protein (RIPR) from Plasmodium falciparum (isolate 3D7).